Reading from the N-terminus, the 358-residue chain is UDP-N-acetylglucosamine--N-acetylmuramyl-(pentapeptide) pyrophosphoryl-undecaprenol N-acetylglucosamine transferase (358 aa).

Residues 12–14 (TAG), R165, S195, and Q290 contribute to the UDP-N-acetyl-alpha-D-glucosamine site.

Belongs to the glycosyltransferase 28 family. MurG subfamily.

It localises to the cell membrane. The enzyme catalyses di-trans,octa-cis-undecaprenyl diphospho-N-acetyl-alpha-D-muramoyl-L-alanyl-D-glutamyl-meso-2,6-diaminopimeloyl-D-alanyl-D-alanine + UDP-N-acetyl-alpha-D-glucosamine = di-trans,octa-cis-undecaprenyl diphospho-[N-acetyl-alpha-D-glucosaminyl-(1-&gt;4)]-N-acetyl-alpha-D-muramoyl-L-alanyl-D-glutamyl-meso-2,6-diaminopimeloyl-D-alanyl-D-alanine + UDP + H(+). Its pathway is cell wall biogenesis; peptidoglycan biosynthesis. Cell wall formation. Catalyzes the transfer of a GlcNAc subunit on undecaprenyl-pyrophosphoryl-MurNAc-pentapeptide (lipid intermediate I) to form undecaprenyl-pyrophosphoryl-MurNAc-(pentapeptide)GlcNAc (lipid intermediate II). This chain is UDP-N-acetylglucosamine--N-acetylmuramyl-(pentapeptide) pyrophosphoryl-undecaprenol N-acetylglucosamine transferase, found in Clostridium tetani (strain Massachusetts / E88).